Here is a 109-residue protein sequence, read N- to C-terminus: uncharacterized protein (109 aa).

Its subcellular location is the mitochondrion. This is an uncharacterized protein from Arabidopsis thaliana (Mouse-ear cress).